Reading from the N-terminus, the 158-residue chain is Rhombotin-2 (158 aa).

2 consecutive LIM zinc-binding domains span residues 30 to 89 and 94 to 153; these read CGGC…RLFG and CASC…EWTK.

Interacts with BEX2 and KDM5A. Interacts via its LIM domains with ELF2 and LDB1. Also interacts with basic helix-loop-helix protein TAL1/SCL and can assemble in a complex with LMO2 and TAL1/SCL. As to expression, expressed in early mouse development in central nervous system, lung, kidney, liver and spleen but only very low levels occur in thymus.

The protein resides in the nucleus. Its function is as follows. Acts with TAL1/SCL to regulate red blood cell development. Also acts with LDB1 to maintain erythroid precursors in an immature state. The sequence is that of Rhombotin-2 (Lmo2) from Mus musculus (Mouse).